Reading from the N-terminus, the 588-residue chain is Schlafen family member 12-like (588 aa).

The helical transmembrane segment at 566–586 threads the bilayer; that stretch reads IFLFVCLFRFCLFVCWFVCFF.

It belongs to the Schlafen family.

Its subcellular location is the membrane. The protein is Schlafen family member 12-like (SLFN12L) of Homo sapiens (Human).